We begin with the raw amino-acid sequence, 855 residues long: Sucrose synthase 7 (855 aa).

A GT-B glycosyltransferase region spans residues 279–758 (SIFNIVIFSI…GLQRIYECYT (480 aa)).

It belongs to the glycosyltransferase 1 family. Plant sucrose synthase subfamily. Predominantly expressed in roots, flowers and immature seeds.

The protein localises to the cytoplasm. It localises to the membrane. The catalysed reaction is an NDP-alpha-D-glucose + D-fructose = a ribonucleoside 5'-diphosphate + sucrose + H(+). In terms of biological role, sucrose-cleaving enzyme that provides UDP-glucose and fructose for various metabolic pathways. This Oryza sativa subsp. japonica (Rice) protein is Sucrose synthase 7 (SUS7).